The primary structure comprises 231 residues: MARLTKRLKSIKDKVQPGKVYAIDDAFEVLKSVSSVKFVESVDVAVNLGVDPRKSDQAVRGATVLPHGTGKSVRVAVFAQGANAEAALAAGADIVGMDDLGAQVKAGELNFDVVIAAPDAMRVVGQLGQILGPRGLMPNPKTGTVTPDVATAVKNAKAGQVRYRTDKKGIIHCTIGKISFDSAALKENLEALLADLKKLKPSTAKGVYVKKITVSSTMGPGLAVDQSTLAA.

It belongs to the universal ribosomal protein uL1 family. As to quaternary structure, part of the 50S ribosomal subunit.

Binds directly to 23S rRNA. The L1 stalk is quite mobile in the ribosome, and is involved in E site tRNA release. In terms of biological role, protein L1 is also a translational repressor protein, it controls the translation of the L11 operon by binding to its mRNA. This is Large ribosomal subunit protein uL1 from Methylococcus capsulatus (strain ATCC 33009 / NCIMB 11132 / Bath).